Here is a 218-residue protein sequence, read N- to C-terminus: Methylthioribulose-1-phosphate dehydratase (218 aa).

Histidine 107 and histidine 109 together coordinate Zn(2+).

It belongs to the aldolase class II family. MtnB subfamily. Requires Zn(2+) as cofactor.

It catalyses the reaction 5-(methylsulfanyl)-D-ribulose 1-phosphate = 5-methylsulfanyl-2,3-dioxopentyl phosphate + H2O. The protein operates within amino-acid biosynthesis; L-methionine biosynthesis via salvage pathway; L-methionine from S-methyl-5-thio-alpha-D-ribose 1-phosphate: step 2/6. In terms of biological role, catalyzes the dehydration of methylthioribulose-1-phosphate (MTRu-1-P) into 2,3-diketo-5-methylthiopentyl-1-phosphate (DK-MTP-1-P). This chain is Methylthioribulose-1-phosphate dehydratase, found in Xylella fastidiosa (strain Temecula1 / ATCC 700964).